Reading from the N-terminus, the 735-residue chain is F-box and leucine-rich repeat protein 13 (735 aa).

The region spanning 152-198 (KCDISLLPERAILQIFFYLSLKDVIICGQVNHAWMLMTQLNSLWNAI) is the F-box domain. LRR repeat units follow at residues 230-254 (GCLLRPKTFRSVSHCRNLQELNVSD), 255-280 (CPTFTDESMRHISEGCPGVLCLNLSN), 281-305 (TTITNRTMRLLPRHFHNLQNLSLAY), 306-333 (CRRFTDKGLQYLNLGNGCHKLIYLDLSG), 334-359 (CTQISVQGFRYIANSCTGIMHLTIND), 360-385 (MPTLTDNCVKALVEKCSRITSLVFTG), 386-406 (APHISDCTFRALSACKLRKIR), 410-435 (NKRVTDASFKFIDKNYPNLSHIYMAD), 436-460 (CKGITDSSLRSLSPLKQLTVLNLAN), 461-488 (CVRIGDMGLKQFLDGPASMRIRELNLSN), 489-514 (CVRLSDASVMKLSERCPNLNYLSLRN), 515-538 (CEHLTAQGIGYIVNIFSLVSIDLS), 539-563 (GTDISNEGLNVLSRHKKLKELSVSE), 564-589 (CYRITDDGIQAFCKSSLILEHLDVSY), 590-615 (CSQLSDMIIKALAIYCINLTSLSIAG), 616-641 (CPKITDSAMEMLSAKCHYLHILDISG), and 642-667 (CVLLTDQILEDLQIGCKQLRILKMQY). Positions 682-692 (KVQQQEYNTND) are enriched in polar residues. The interval 682–703 (KVQQQEYNTNDPPRWFGYDREG) is disordered.

The protein belongs to the DRC6 family. In terms of assembly, component of the nexin-dynein regulatory complex (N-DRC). Directly interacts with SKP1 and CUL1. Interacts with TCTE1/DRC5.

It is found in the cytoplasm. The protein resides in the cytoskeleton. The protein localises to the flagellum axoneme. Its subcellular location is the microtubule organizing center. It localises to the centrosome. Its function is as follows. Substrate-recognition component of the SCF (SKP1-CUL1-F-box protein)-type E3 ubiquitin ligase complex. Component of the nexin-dynein regulatory complex (N-DRC), a key regulator of ciliary/flagellar motility which maintains the alignment and integrity of the distal axoneme and regulates microtubule sliding in motile axonemes. Specifically targets CEP192 isoform 3 for ubiquitin-mediated proteolysis and thereby acts as a regulator of microtubule nucleation activity. In Homo sapiens (Human), this protein is F-box and leucine-rich repeat protein 13 (FBXL13).